We begin with the raw amino-acid sequence, 215 residues long: MNGIQVDINRLKKGEVSLGTSIMAVTFKDGVILGADSRTTTGAYIANRVTDKLTRVHDKIWCCRSGSAADTQAIADIVQYHLELYTSQYGTPSTETAASVFKELCYENKDNLTAGIIVAGYDDKNKGEVYTIPLGGSVHKLPYAIAGSGSTFIYGYCDKNFRENMSKEETVDFIKHSLSQAIKWDGSSGGVIRMVVLTAAGVERLIFYPDEYEQL.

The residue at position 1 (M1) is an N-acetylmethionine. Positions 1-19 (MNGIQVDINRLKKGEVSLG) are cleaved as a propeptide — removed in mature form. T20 functions as the Nucleophile in the catalytic mechanism.

This sequence belongs to the peptidase T1B family. As to quaternary structure, the 26S proteasome consists of a 20S proteasome core and two 19S regulatory subunits. The 20S proteasome core is composed of 28 subunits that are arranged in four stacked rings, resulting in a barrel-shaped structure. The two end rings are each formed by seven alpha subunits, and the two central rings are each formed by seven beta subunits. The catalytic chamber with the active sites is on the inside of the barrel.

The protein resides in the cytoplasm. It is found in the nucleus. The catalysed reaction is Cleavage of peptide bonds with very broad specificity.. Functionally, the proteasome degrades poly-ubiquitinated proteins in the cytoplasm and in the nucleus. It is essential for the regulated turnover of proteins and for the removal of misfolded proteins. The proteasome is a multicatalytic proteinase complex that is characterized by its ability to cleave peptides with Arg, Phe, Tyr, Leu, and Glu adjacent to the leaving group at neutral or slightly basic pH. It has an ATP-dependent proteolytic activity. PRE3 and PRE4 are necessary for the peptidyl-glutamyl-peptide-hydrolyzing activity. This subunit is necessary for the peptidylglutamyl-peptide hydrolyzing activity. The protein is Proteasome subunit beta type-1 (PRE3) of Saccharomyces cerevisiae (strain ATCC 204508 / S288c) (Baker's yeast).